The primary structure comprises 678 residues: AAC-rich mRNA clone AAC4 protein (678 aa).

Residues 55–73 (NNNNNNNNNNNNNNNNNNN) show a composition bias toward low complexity. A disordered region spans residues 55-75 (NNNNNNNNNNNNNNNNNNNTS). Residues 243–263 (IIPIYHEIILVLCNWLVVAFY) form a helical membrane-spanning segment. The span at 318 to 346 (NNNNNNNNNNNNNNNNNNNNNNNNKTNNN) shows a compositional bias: low complexity. The disordered stretch occupies residues 318-347 (NNNNNNNNNNNNNNNNNNNNNNNNKTNNNQ).

The protein localises to the membrane. The sequence is that of AAC-rich mRNA clone AAC4 protein (AAC4) from Dictyostelium discoideum (Social amoeba).